We begin with the raw amino-acid sequence, 630 residues long: Phosphomethylpyrimidine synthase (630 aa).

Substrate contacts are provided by residues Asn-227, Met-256, Tyr-285, His-321, 341-343 (SRG), 382-385 (DGLR), and Glu-421. His-425 provides a ligand contact to Zn(2+). Tyr-448 is a binding site for substrate. A Zn(2+)-binding site is contributed by His-489. [4Fe-4S] cluster is bound by residues Cys-569, Cys-572, and Cys-577.

The protein belongs to the ThiC family. Homodimer. [4Fe-4S] cluster serves as cofactor.

The catalysed reaction is 5-amino-1-(5-phospho-beta-D-ribosyl)imidazole + S-adenosyl-L-methionine = 4-amino-2-methyl-5-(phosphooxymethyl)pyrimidine + CO + 5'-deoxyadenosine + formate + L-methionine + 3 H(+). Its pathway is cofactor biosynthesis; thiamine diphosphate biosynthesis. Functionally, catalyzes the synthesis of the hydroxymethylpyrimidine phosphate (HMP-P) moiety of thiamine from aminoimidazole ribotide (AIR) in a radical S-adenosyl-L-methionine (SAM)-dependent reaction. The protein is Phosphomethylpyrimidine synthase of Hydrogenovibrio crunogenus (strain DSM 25203 / XCL-2) (Thiomicrospira crunogena).